A 717-amino-acid polypeptide reads, in one-letter code: Proline-rich receptor-like protein kinase PERK2 (717 aa).

A compositionally biased stretch (pro residues) spans M1–S197. The interval M1–K221 is disordered. Topologically, residues M1 to M228 are extracellular. The segment covering P198–S220 has biased composition (low complexity). A helical membrane pass occupies residues V229–L249. Topologically, residues C250–G717 are cytoplasmic. Residues N258–V323 form a disordered region. Pro residues predominate over residues V289 to P303. Residues S307–S322 show a composition bias toward low complexity. The region spanning F354–I631 is the Protein kinase domain. ATP-binding positions include L360–V368 and K382. D478 functions as the Proton acceptor in the catalytic mechanism. Composition is skewed to polar residues over residues S632–H644 and S692–A705. Disordered stretches follow at residues S632–G665 and Y690–G717.

Belongs to the protein kinase superfamily. Ser/Thr protein kinase family. In terms of tissue distribution, mostly expressed in inflorescence bolt, flower buds and siliques, and, to a lower extent, in roots, seedlings and leaves.

It localises to the cell membrane. The catalysed reaction is L-seryl-[protein] + ATP = O-phospho-L-seryl-[protein] + ADP + H(+). The enzyme catalyses L-threonyl-[protein] + ATP = O-phospho-L-threonyl-[protein] + ADP + H(+). This chain is Proline-rich receptor-like protein kinase PERK2 (PERK2), found in Arabidopsis thaliana (Mouse-ear cress).